The primary structure comprises 252 residues: Imidazole glycerol phosphate synthase subunit HisF (252 aa).

Active-site residues include aspartate 11 and aspartate 130.

Belongs to the HisA/HisF family. In terms of assembly, heterodimer of HisH and HisF.

It localises to the cytoplasm. It catalyses the reaction 5-[(5-phospho-1-deoxy-D-ribulos-1-ylimino)methylamino]-1-(5-phospho-beta-D-ribosyl)imidazole-4-carboxamide + L-glutamine = D-erythro-1-(imidazol-4-yl)glycerol 3-phosphate + 5-amino-1-(5-phospho-beta-D-ribosyl)imidazole-4-carboxamide + L-glutamate + H(+). The protein operates within amino-acid biosynthesis; L-histidine biosynthesis; L-histidine from 5-phospho-alpha-D-ribose 1-diphosphate: step 5/9. IGPS catalyzes the conversion of PRFAR and glutamine to IGP, AICAR and glutamate. The HisF subunit catalyzes the cyclization activity that produces IGP and AICAR from PRFAR using the ammonia provided by the HisH subunit. The protein is Imidazole glycerol phosphate synthase subunit HisF of Bacillus mycoides (strain KBAB4) (Bacillus weihenstephanensis).